We begin with the raw amino-acid sequence, 385 residues long: Probable splicing factor YJU2B (385 aa).

The tract at residues 1 to 26 (MGERKGQNKYYPPDFNPEKHGSLNRY) is disordered. Residue serine 40 is modified to Phosphoserine. Residues 182-214 (LNSMLRRHFREKKKAMQEEEEKDQALQAKASLA) are a coiled coil. The disordered stretch occupies residues 257 to 385 (PSAQGPSASS…VADYSDSESE (129 aa)). A compositionally biased stretch (low complexity) spans 258 to 271 (SAQGPSASSSKASS). At serine 306 the chain carries Phosphoserine. Polar residues predominate over residues 359 to 373 (GSSQEDLLNPNTPNA).

This sequence belongs to the CWC16 family.

The protein resides in the nucleus. Functionally, may be involved in mRNA splicing. The sequence is that of Probable splicing factor YJU2B (Yju2b) from Mus musculus (Mouse).